We begin with the raw amino-acid sequence, 188 residues long: Large ribosomal subunit protein eL18 (188 aa).

Residues 153–188 are disordered; the sequence is GKAPGTPHSHTKPYIRSKGRKFERARGRRASRGYKN. Basic residues-rich tracts occupy residues 161–171 and 178–188; these read SHTKPYIRSKG and RGRRASRGYKN.

The protein belongs to the eukaryotic ribosomal protein eL18 family. Component of the large ribosomal subunit.

Its subcellular location is the cytoplasm. The protein resides in the cytosol. It is found in the rough endoplasmic reticulum. In terms of biological role, component of the large ribosomal subunit. The ribosome is a large ribonucleoprotein complex responsible for the synthesis of proteins in the cell. The polypeptide is Large ribosomal subunit protein eL18 (rpl18) (Ictalurus punctatus (Channel catfish)).